The sequence spans 91 residues: Small ribosomal subunit protein uS19 (91 aa).

This sequence belongs to the universal ribosomal protein uS19 family.

In terms of biological role, protein S19 forms a complex with S13 that binds strongly to the 16S ribosomal RNA. The protein is Small ribosomal subunit protein uS19 of Afipia carboxidovorans (strain ATCC 49405 / DSM 1227 / KCTC 32145 / OM5) (Oligotropha carboxidovorans).